The following is a 285-amino-acid chain: uncharacterized protein (285 aa).

Residues 92–199 enclose the Guanylate cyclase domain; it reads TLLLADVEES…PTINRTARLR (108 aa).

This sequence belongs to the adenylyl cyclase class-4/guanylyl cyclase family.

This is an uncharacterized protein from Mycobacterium tuberculosis (strain CDC 1551 / Oshkosh).